The chain runs to 364 residues: Tubulin alpha-2 chain (364 aa).

GTP-binding residues include Gly59, Thr60, Thr94, Asn121, and Asn144. Residue Glu170 is part of the active site.

This sequence belongs to the tubulin family. Dimer of alpha and beta chains. A typical microtubule is a hollow water-filled tube with an outer diameter of 25 nm and an inner diameter of 15 nM. Alpha-beta heterodimers associate head-to-tail to form protofilaments running lengthwise along the microtubule wall with the beta-tubulin subunit facing the microtubule plus end conferring a structural polarity. Microtubules usually have 13 protofilaments but different protofilament numbers can be found in some organisms and specialized cells. It depends on Mg(2+) as a cofactor. In terms of processing, undergoes a tyrosination/detyrosination cycle, the cyclic removal and re-addition of a C-terminal tyrosine residue by the enzymes tubulin tyrosine carboxypeptidase (TTCP) and tubulin tyrosine ligase (TTL), respectively.

Its subcellular location is the cytoplasm. It localises to the cytoskeleton. It catalyses the reaction GTP + H2O = GDP + phosphate + H(+). Tubulin is the major constituent of microtubules, a cylinder consisting of laterally associated linear protofilaments composed of alpha- and beta-tubulin heterodimers. Microtubules grow by the addition of GTP-tubulin dimers to the microtubule end, where a stabilizing cap forms. Below the cap, tubulin dimers are in GDP-bound state, owing to GTPase activity of alpha-tubulin. This Anemia phyllitidis (Fern) protein is Tubulin alpha-2 chain (TUBA2).